We begin with the raw amino-acid sequence, 366 residues long: Alcohol dehydrogenase (366 aa).

Zn(2+) is bound by residues Cys41, His62, Glu63, and Asp167.

This sequence belongs to the zinc-containing alcohol dehydrogenase family. As to quaternary structure, homotetramer. Requires Zn(2+) as cofactor.

It catalyses the reaction a primary alcohol + NAD(+) = an aldehyde + NADH + H(+). The enzyme catalyses a secondary alcohol + NAD(+) = a ketone + NADH + H(+). The catalysed reaction is (R,R)-butane-2,3-diol + NAD(+) = (R)-acetoin + NADH + H(+). It carries out the reaction an aldehyde + NAD(+) + H2O = a carboxylate + NADH + 2 H(+). Multifunctional alcohol dehydrogenase exhibiting NAD(+)-dependent dehydrogenase activities for 2,3-butanediol, ethanol and acetaldehyde, and reductase activities for acetoin (NADH-dependent), and diacetyl and acetaldehyde (independently of whether NADH or NADPH is the reductant). The rate of oxidation of 2,3-butanediol is much higher than for the oxidation of ethanol. Has acetaldehyde dehydrogenase activity leading to acetate formation. May function in the release of excess reducing power in the absence of exogenous hydrogen acceptors such as oxygen. This Cupriavidus necator (Alcaligenes eutrophus) protein is Alcohol dehydrogenase (adh).